We begin with the raw amino-acid sequence, 685 residues long: ATP-dependent permease MDL1 (685 aa).

The segment covering 48 to 70 (FNSKSSTAPNTEANSNGSTNSQS) has biased composition (polar residues). The interval 48-76 (FNSKSSTAPNTEANSNGSTNSQSDTKKPR) is disordered. Asn-63 is a glycosylation site (N-linked (GlcNAc...) asparagine). The helical transmembrane segment at 96–116 (LIFFALICLVTTSATSMALPL) threads the bilayer. The region spanning 97 to 407 (IFFALICLVT…LGNFYTELMK (311 aa)) is the ABC transmembrane type-1 domain. The disordered stretch occupies residues 125–147 (TKKDDDDDKDNDNDDKDDTQPSD). The segment covering 129–141 (DDDDKDNDNDDKD) has biased composition (acidic residues). The chain crosses the membrane as a helical span at residues 158–180 (FYSALGVLFIVSASTNFGRIYLL). A glycan (N-linked (GlcNAc...) asparagine) is linked at Asn-239. The chain crosses the membrane as a helical span at residues 266 to 282 (LCMSLIFPPLITMSWFY). Asn-336 carries N-linked (GlcNAc...) asparagine glycosylation. 2 helical membrane passes run 353–373 (GFIGNVTMIGLLIMGTKLIGA) and 381–401 (LSSFMMYAVYTGTSVFGLGNF). The region spanning 440–680 (IEFKGIDFTY…PNSQFNKLLK (241 aa)) is the ABC transporter domain. Position 475–482 (475–482 (GPSGSGKS)) interacts with ATP. N-linked (GlcNAc...) asparagine glycans are attached at residues Asn-553 and Asn-576.

The protein belongs to the ABC transporter superfamily. ABCB family. Mitochondrial peptide exporter (TC 3.A.1.212) subfamily.

It localises to the membrane. The polypeptide is ATP-dependent permease MDL1 (MDL1) (Candida albicans (Yeast)).